The following is a 258-amino-acid chain: E3 ubiquitin-protein ligase RNF170 (258 aa).

The Lumenal segment spans residues 1 to 24; sequence MAKYQGEVQSLKLDDDSVIEGVSD. Residues 25–45 form a helical membrane-spanning segment; the sequence is QVLVAVVVSFALIATLVYALF. At 46–201 the chain is on the cytoplasmic side; it reads RNVHQNIHPE…GGLFWMFRIR (156 aa). The segment at 87-130 adopts an RING-type zinc-finger fold; sequence CPICLHQASFPVETNCGHLFCGACIIAYWRYGSWLGAISCPICR. The chain crosses the membrane as a helical span at residues 202–222; sequence IILCLMGAFFYLISPLDFVPE. Position 223 (Ala-223) is a topological domain, lumenal. The chain crosses the membrane as a helical span at residues 224-244; it reads LFGILGFLDDFFVIFLLLIYI. Topologically, residues 245–258 are cytoplasmic; the sequence is SIMYREVITQRLTR.

As to quaternary structure, (Microbial infection) Interacts with human cytomegalovirus protein NEC2/UL50; this interaction promotes of UBA7 ubiquitination and subsequent proteasomal degradation. In terms of assembly, constitutively associated with the ERLIN1/ERLIN 2 complex. Interacts with activated ITPR1. In terms of tissue distribution, expressed in the spinal cord.

The protein localises to the endoplasmic reticulum membrane. It catalyses the reaction S-ubiquitinyl-[E2 ubiquitin-conjugating enzyme]-L-cysteine + [acceptor protein]-L-lysine = [E2 ubiquitin-conjugating enzyme]-L-cysteine + N(6)-ubiquitinyl-[acceptor protein]-L-lysine.. It participates in protein modification; protein ubiquitination. E3 ubiquitin-protein ligase that plays an essential role in stimulus-induced inositol 1,4,5-trisphosphate receptor type 1 (ITPR1) ubiquitination and degradation via the endoplasmic reticulum-associated degradation (ERAD) pathway. Also involved in ITPR1 turnover in resting cells. Selectively inhibits the TLR3-triggered innate immune response by promoting the 'Lys-48'-linked polyubiquitination and degradation of TLR3. This is E3 ubiquitin-protein ligase RNF170 (RNF170) from Homo sapiens (Human).